The primary structure comprises 342 residues: Serpentine receptor class beta-16 (342 aa).

The Extracellular segment spans residues 1 to 22; sequence MDRELIEICKENSATAFSVGYQ. The chain crosses the membrane as a helical span at residues 23 to 43; the sequence is IVYLIYVVLSVTSIFTCSYFI. The Cytoplasmic segment spans residues 44 to 61; that stretch reads KTFIWNSTFHPNFKLLLT. The helical transmembrane segment at 62–82 threads the bilayer; sequence MYFFAAIFHSFLFTASYLMMI. Residues 83-102 lie on the Extracellular side of the membrane; it reads ERFLDYQTDCDIHVSMVPYA. Residues 103–123 form a helical membrane-spanning segment; that stretch reads IVHSSIACCLFCGMLTQVFMV. At 124–141 the chain is on the cytoplasmic side; sequence IERLLATIKIESYEHNTS. Residues 142–162 traverse the membrane as a helical segment; that stretch reads FWHILAYLFFCIVLPLSLLVW. The Extracellular portion of the chain corresponds to 163 to 187; that stretch reads AYQDADYNSPVITAISPPKGVEIRL. The chain crosses the membrane as a helical span at residues 188-208; the sequence is NILYIFCFFLAILALILLQVV. Residues 209-237 are Cytoplasmic-facing; sequence RFVNKRRESRIEISLSGRFQIVENIDTTT. A helical membrane pass occupies residues 238-258; sequence FISSILIINMIMSVIYIVGTF. Residues 259-274 are Extracellular-facing; that stretch reads TLRNFQFDAFINNQPA. Residues 275–295 traverse the membrane as a helical segment; sequence LATVKTIFYLHPLFSFLMPLI. The Cytoplasmic segment spans residues 296 to 342; that stretch reads SSYHLSKMRERRVKRREHLMAIKTKGREGSDAYNQLLHDQWTQHFLK.

This sequence belongs to the nematode receptor-like protein srb family. As to expression, expressed throughout the nervous system, in pharyngeal muscle, hermaphrodite vulval muscles and in the male tail. Not expressed in male somatic gonads or sperm.

It is found in the cell membrane. Its subcellular location is the perikaryon. It localises to the cell projection. The protein localises to the dendrite. G-protein coupled receptor. Plays a role in the navigational capacity of sperm and promotes the targeting of sperm derived from males to the fertilization site in the uterus of hermaphrodites. In Caenorhabditis elegans, this protein is Serpentine receptor class beta-16.